Consider the following 295-residue polypeptide: Putative aquaporin-12A (295 aa).

A helical membrane pass occupies residues 1-21 (MAGLNVSLSFFFATFALCEAA). Residues 22–54 (RRASKALLPVGAYEVFAREAMRTLVELGPWAGD) lie on the Extracellular side of the membrane. A helical membrane pass occupies residues 55 to 75 (FGPDLLLTLLFLLFLAHGVTL). The Cytoplasmic segment spans residues 76–99 (DGASANPTVSLQEFLMAEQSLPGT). The discontinuously helical intramembrane region spans 77 to 114 (GASANPTVSLQEFLMAEQSLPGTLLKLAAQGLGMQAAC). The NPA 1 motif lies at 81 to 83 (NPT). Residues 100–126 (LLKLAAQGLGMQAACTLMRLCWAWELS) traverse the membrane as a helical segment. At 127–145 (DLHLLQSLMAQSCSSALRT) the chain is on the extracellular side. A helical membrane pass occupies residues 146 to 166 (SVPHGALVEAACAFCFHLTLL). The Cytoplasmic segment spans residues 167 to 178 (HLRHSPPAYSGP). The chain crosses the membrane as a helical span at residues 179 to 199 (AVALLVTVTAYTAGPFTSAFF). Positions 195 to 206 (TSAFFNPALAAS) form an intramembrane region, discontinuously helical. The short motif at 200 to 202 (NPA) is the NPA 2 element. At 200–215 (NPALAASVTFACSGHT) the chain is on the extracellular side. A helical transmembrane segment spans residues 216–236 (LLEYVQVYWLGPLTGMVLAVL). Over 237–295 (LHQGRLPHLFQRNLFYGQKNKYRAPRGKPAPASGDTQTPAKGSSVREPGRSGVEGPHSS) the chain is Cytoplasmic. The disordered stretch occupies residues 257 to 295 (KYRAPRGKPAPASGDTQTPAKGSSVREPGRSGVEGPHSS).

This sequence belongs to the MIP/aquaporin (TC 1.A.8) family. AQP11/AQP12 subfamily. In terms of assembly, homotetramer; each monomer provides an independent water pore. Restricted to the pancreas.

It localises to the membrane. The catalysed reaction is H2O(in) = H2O(out). Its function is as follows. Putative aquaporin. Could form homotetrameric transmembrane channels, with each monomer independently mediating water transport across the plasma membrane along its osmotic gradient. This Homo sapiens (Human) protein is Putative aquaporin-12A.